Here is a 392-residue protein sequence, read N- to C-terminus: Alkaline phosphatase L (392 aa).

An N-terminal signal peptide occupies residues 1–23 (MYKRSLIAASLSVAALVSAQAMA).

The protein belongs to the PstS family. Homodimer.

The protein localises to the secreted. Its subcellular location is the periplasm. It carries out the reaction a phosphate monoester + H2O = an alcohol + phosphate. Functionally, has both a phosphomonoesterase and phosphodiesterase activity. The protein is Alkaline phosphatase L of Pseudomonas aeruginosa.